The sequence spans 192 residues: Fe/S biogenesis protein NfuA (192 aa).

Residues Cys149 and Cys152 each coordinate [4Fe-4S] cluster.

The protein belongs to the NfuA family. Homodimer. The cofactor is [4Fe-4S] cluster.

Functionally, involved in iron-sulfur cluster biogenesis. Binds a 4Fe-4S cluster, can transfer this cluster to apoproteins, and thereby intervenes in the maturation of Fe/S proteins. Could also act as a scaffold/chaperone for damaged Fe/S proteins. The sequence is that of Fe/S biogenesis protein NfuA from Shewanella pealeana (strain ATCC 700345 / ANG-SQ1).